We begin with the raw amino-acid sequence, 382 residues long: tRNA(Ile)-lysidine synthase (382 aa).

50–55 (SGGRDS) serves as a coordination point for ATP.

The protein belongs to the tRNA(Ile)-lysidine synthase family.

It localises to the cytoplasm. It carries out the reaction cytidine(34) in tRNA(Ile2) + L-lysine + ATP = lysidine(34) in tRNA(Ile2) + AMP + diphosphate + H(+). In terms of biological role, ligates lysine onto the cytidine present at position 34 of the AUA codon-specific tRNA(Ile) that contains the anticodon CAU, in an ATP-dependent manner. Cytidine is converted to lysidine, thus changing the amino acid specificity of the tRNA from methionine to isoleucine. The sequence is that of tRNA(Ile)-lysidine synthase from Bifidobacterium animalis subsp. lactis (strain AD011).